A 1042-amino-acid polypeptide reads, in one-letter code: Diacylglycerol lipase-alpha (1042 aa).

Residues 1–22 (MPGIVVFRRRWSVGSDDLVLPA) lie on the Cytoplasmic side of the membrane. The helical transmembrane segment at 23-43 (IFLFLLHTTWFVILSVVLFGL) threads the bilayer. The Extracellular segment spans residues 44 to 60 (VYNPHEACSLNLVDHGR). A helical transmembrane segment spans residues 61–81 (GYLGILLSCMIAEMAIIWLSM). Residues 82-101 (RGGILYTEPRDSMQYVLYVR) are Cytoplasmic-facing. A helical membrane pass occupies residues 102–122 (LAILVIEFIYAIVGIVWLTQY). At 123-136 (YTSCNDLTAKNVTL) the chain is on the extracellular side. Asparagine 133 is a glycosylation site (N-linked (GlcNAc...) asparagine). Residues 137 to 157 (GMVVCNWVVILSVCITVLCVF) form a helical membrane-spanning segment. Over 158–1042 (DPTGRTFVKL…KQDELVISAR (885 aa)) the chain is Cytoplasmic. Catalysis depends on charge relay system residues serine 472 and aspartate 524. A phosphoserine mark is found at serine 727, serine 729, serine 732, serine 743, serine 782, serine 784, serine 806, serine 808, serine 833, serine 847, and serine 952. Residues 846–903 (LSKHSQDTQPLEAALGSGGVTPERPPSAAANDEEEEVGGGGGGPASRGELALHNGRLG) form a disordered region. Positions 1014–1042 (LAADKIRTSTPTGHGASPAKQDELVISAR) are disordered. Position 1023 is a phosphothreonine (threonine 1023).

The protein belongs to the AB hydrolase superfamily. Lipase family. As to quaternary structure, interacts (via C-terminal) with CAMK2A; leading to the phosphorylation and inhibition of DAGLA enzymatic activity. Interacts (via PPXXF motif) with HOMER1 and HOMER2; this interaction is required for DAGLA membrane localization. It depends on Ca(2+) as a cofactor. Post-translationally, phosphorylated at Ser-782 and Ser-808 by CAMK2A; phosphorylation by CAMK2A inhibits diacylglycerol lipase activity. As to expression, highly expressed in brain and pancreas.

The protein resides in the cell membrane. It is found in the postsynaptic density membrane. The protein localises to the early endosome membrane. It localises to the cell projection. Its subcellular location is the dendritic spine membrane. It catalyses the reaction a 1,2-diacyl-sn-glycerol + H2O = a 2-acylglycerol + a fatty acid + H(+). The enzyme catalyses 1-octadecanoyl-2-(5Z,8Z,11Z,14Z-eicosatetraenoyl)-sn-glycerol + H2O = 2-(5Z,8Z,11Z,14Z-eicosatetraenoyl)-glycerol + octadecanoate + H(+). It carries out the reaction 1,2-di-(9Z-octadecenoyl)-sn-glycerol + H2O = 2-(9Z-octadecenoyl)-glycerol + (9Z)-octadecenoate + H(+). The catalysed reaction is 1-(9Z-octadecenoyl)-2-(5Z,8Z,11Z,14Z-eicosatetraenoyl)-sn-glycerol + H2O = 2-(5Z,8Z,11Z,14Z-eicosatetraenoyl)-glycerol + (9Z)-octadecenoate + H(+). It catalyses the reaction 1-(9Z-octadecenoyl)-2-octadecanoyl-sn-glycerol + H2O = 2-octadecanoylglycerol + (9Z)-octadecenoate + H(+). The enzyme catalyses 1-(9Z-octadecenoyl)-2-(9Z,12Z-octadecadienoyl)-sn-glycerol + H2O = 2-(9Z,12Z-octadecadienoyl)-glycerol + (9Z)-octadecenoate + H(+). It carries out the reaction 1-(9Z-octadecenoyl)-2-O-(5Z,8Z,11Z,14Z-eicosatetraenyl)-sn-glycerol + H2O = 2-O-(5Z,8Z,11Z,14Z)-eicosatetraenylglycerol + (9Z)-octadecenoate + H(+). With respect to regulation, inhibited by 1,2,3-triazole urea covalent inhibitors KT172, DH376 and DO34. Inhibited by p-hydroxy-mercuri-benzoate and HgCl(2), but not to PMSF. Also inhibited by RHC80267. Diacylglycerol lipase activity is inhibited by the phosphorylation of Ser-782 and Ser-808 by CAMK2A. Functionally, serine hydrolase that hydrolyzes arachidonic acid-esterified diacylglycerols (DAGs) to produce the principal endocannabinoid, 2-arachidonoylglycerol (2-AG). Preferentially hydrolyzes sn-1 fatty acids from diacylglycerols (DAG) that contain arachidonic acid (AA) esterified at the sn-2 position to biosynthesize 2-AG. Has negligible activity against other lipids including monoacylglycerols and phospholipids. Plays a key role in regulating 2-AG signaling in the central nervous system (CNS). Regulates 2-AG involved in retrograde suppression at central synapses. Supports axonal growth during development and adult neurogenesis. Plays a role for eCB signaling in the physiological regulation of anxiety and depressive behaviors. Also regulates neuroinflammatory responses in the brain, in particular, LPS-induced microglial activation. This chain is Diacylglycerol lipase-alpha (DAGLA), found in Homo sapiens (Human).